The sequence spans 313 residues: Oxaloacetate tautomerase Fahd2a, mitochondrial (313 aa).

A mitochondrion-targeting transit peptide spans 1-84 (MLGSGRRRLL…TALSVARRAL (84 aa)). 3 residues coordinate Mg(2+): Glu159, Glu161, and Asp190. Residue Lys202 is modified to N6-acetyllysine; alternate. Lys202 is subject to N6-succinyllysine; alternate. N6-acetyllysine is present on Lys233.

It belongs to the FAH family. Mg(2+) serves as cofactor. It depends on Mn(2+) as a cofactor.

It is found in the mitochondrion. The enzyme catalyses oxaloacetate = enol-oxaloacetate. Its function is as follows. Tautomerase that converts enol-oxaloacetate, a strong inhibitor of succinate dehydrogenase, to the physiological keto form of oxaloacetate. It is thereby required to maximize aerobic respiration efficiency by preventing succinate dehydrogenase inhibition. The polypeptide is Oxaloacetate tautomerase Fahd2a, mitochondrial (Rattus norvegicus (Rat)).